Reading from the N-terminus, the 156-residue chain is MSRRRAAEKREVLPDAKFGDLVLAKFINSVMLQGKKAVAEKIVYGAFERIQSKTGQDPVKVFHDALDNVKPSVEVRSRRVGGATYQVPVEVRPDRRQALGLRWLIDFARKRSETTMVDRLTGEFLDAASNRGGAVKKREDTHRMADANKAFSHYRW.

The protein belongs to the universal ribosomal protein uS7 family. In terms of assembly, part of the 30S ribosomal subunit. Contacts proteins S9 and S11.

Its function is as follows. One of the primary rRNA binding proteins, it binds directly to 16S rRNA where it nucleates assembly of the head domain of the 30S subunit. Is located at the subunit interface close to the decoding center, probably blocks exit of the E-site tRNA. The chain is Small ribosomal subunit protein uS7 from Rhodospirillum rubrum (strain ATCC 11170 / ATH 1.1.1 / DSM 467 / LMG 4362 / NCIMB 8255 / S1).